The sequence spans 295 residues: MDEREALIKAGEIARQVKKEVISLIKPGTKLYDIAEFVERRIIELGGKPAFPCNLSINEIAAHYTPYKGDETVLKEGDYLKVDIGVHVDGYIADTALTFRVGMEEDDLVTAAREALENAIKVIRAGIKINEIGKAIEETIRGYGFNPIVNLSGHKIERYKLHAGISIPNIYRPADSYVLKEGDVIAIEPFATTGAGQVIEVPPALIFMYLRDRPVRMAQARRVLMHIKREYNGLPFAYRWLQGFMPEGQLKLALAQLDRVGAIYSYPILREVRGGLVAQFEHTVIVEKEGAYITT.

His63 contacts substrate. The a divalent metal cation site is built by Asp83, Asp94, and His154. His162 provides a ligand contact to substrate. The a divalent metal cation site is built by Glu188 and Glu281.

This sequence belongs to the peptidase M24A family. Methionine aminopeptidase archaeal type 2 subfamily. Monomer. The cofactor is Fe(2+). Co(2+) serves as cofactor. It depends on Ni(2+) as a cofactor. Mn(2+) is required as a cofactor.

The enzyme catalyses Release of N-terminal amino acids, preferentially methionine, from peptides and arylamides.. Its function is as follows. Removes the N-terminal methionine from nascent proteins. The N-terminal methionine is often cleaved when the second residue in the primary sequence is small and uncharged (Met-Ala-, Cys, Gly, Pro, Ser, Thr, or Val). In Thermococcus onnurineus (strain NA1), this protein is Methionine aminopeptidase.